Consider the following 310-residue polypeptide: HPr kinase/phosphorylase (310 aa).

Catalysis depends on residues His-138 and Lys-159. 153-160 (GASGIGKS) serves as a coordination point for ATP. Ser-160 serves as a coordination point for Mg(2+). Asp-177 serves as the catalytic Proton acceptor; for phosphorylation activity. Proton donor; for dephosphorylation activity. Positions 201–210 (IEIRGVGIID) are important for the catalytic mechanism of both phosphorylation and dephosphorylation. Residue Glu-202 participates in Mg(2+) binding. Arg-243 is a catalytic residue. Residues 264–269 (PVKTGR) are important for the catalytic mechanism of dephosphorylation.

The protein belongs to the HPrK/P family. As to quaternary structure, homohexamer. Mg(2+) serves as cofactor.

It carries out the reaction [HPr protein]-L-serine + ATP = [HPr protein]-O-phospho-L-serine + ADP + H(+). The enzyme catalyses [HPr protein]-O-phospho-L-serine + phosphate + H(+) = [HPr protein]-L-serine + diphosphate. Functionally, catalyzes the ATP- as well as the pyrophosphate-dependent phosphorylation of a specific serine residue in HPr, a phosphocarrier protein of the phosphoenolpyruvate-dependent sugar phosphotransferase system (PTS). HprK/P also catalyzes the pyrophosphate-producing, inorganic phosphate-dependent dephosphorylation (phosphorolysis) of seryl-phosphorylated HPr (P-Ser-HPr). The two antagonistic activities of HprK/P are regulated by several intracellular metabolites, which change their concentration in response to the absence or presence of rapidly metabolisable carbon sources (glucose, fructose, etc.) in the growth medium. Therefore, by controlling the phosphorylation state of HPr, HPrK/P is a sensor enzyme that plays a major role in the regulation of carbon metabolism and sugar transport: it mediates carbon catabolite repression (CCR), and regulates PTS-catalyzed carbohydrate uptake and inducer exclusion. The protein is HPr kinase/phosphorylase of Lactococcus lactis subsp. cremoris (strain SK11).